A 390-amino-acid chain; its full sequence is Histamine H4 receptor (390 aa).

Residues 1–19 lie on the Extracellular side of the membrane; it reads MPDTNSTINLSLSTRVTLA. 2 N-linked (GlcNAc...) asparagine glycosylation sites follow: Asn5 and Asn9. The helical transmembrane segment at 20–40 threads the bilayer; the sequence is FFMSLVAFAIMLGNALVILAF. The Cytoplasmic segment spans residues 41–52; the sequence is VVDKNLRHRSSY. A helical transmembrane segment spans residues 53-73; sequence FFLNLAISDFFVGVISIPLYI. At 74–87 the chain is on the extracellular side; sequence PHTLFEWDFGKEIC. A disulfide bond links Cys87 and Cys164. Residues 88–108 form a helical membrane-spanning segment; sequence VFWLTTDYLLCTASVYNIVLI. The Cytoplasmic portion of the chain corresponds to 109-131; that stretch reads SYDRYLSVSNAVSYRTQHTGVLK. The helical transmembrane segment at 132–152 threads the bilayer; sequence IVTLMVAVWVLAFLVNGPMIL. The Extracellular portion of the chain corresponds to 153-172; it reads VSESWKDEGSECEPGFFSEW. Residues 173-193 traverse the membrane as a helical segment; that stretch reads YILAITSFLEFVIPVILVAYF. Residues 194 to 304 lie on the Cytoplasmic side of the membrane; sequence NMNIYWSLWK…LLRARRLAKS (111 aa). Residues 305–325 form a helical membrane-spanning segment; the sequence is LAILLGVFAVCWAPYSLFTIV. The Extracellular portion of the chain corresponds to 326-341; it reads LSFYSSATGPKSVWYR. The chain crosses the membrane as a helical span at residues 342-362; that stretch reads IAFWLQWFNSFVNPLLYPLCH. Topologically, residues 363–390 are cytoplasmic; that stretch reads KRFQKAFLKIFCIKKQPLPSQHSRSVSS.

Belongs to the G-protein coupled receptor 1 family. As to quaternary structure, interacts with TSPAN4. As to expression, expressed primarily in the bone marrow and eosinophils. Shows preferential distribution in cells of immunological relevance such as T-cells, dendritic cells, monocytes, mast cells, neutrophils. Also expressed in a wide variety of peripheral tissues, including the heart, kidney, liver, lung, pancreas, skeletal muscle, prostate, small intestine, spleen, testis, colon, fetal liver and lymph node.

It is found in the cell membrane. The H4 subclass of histamine receptors could mediate the histamine signals in peripheral tissues. Displays a significant level of constitutive activity (spontaneous activity in the absence of agonist). This is Histamine H4 receptor (HRH4) from Homo sapiens (Human).